The chain runs to 269 residues: Cytochrome c oxidase subunit 3 (269 aa).

7 helical membrane passes run 24-44 (LFTSISLFILTTATVLFMHGF), 46-66 (GFQYLVPVAVINVMYVMGLWF), 90-110 (GVGLFIISEVFFFLAIFWAFF), 138-160 (PLLNTIILLSSGVTITYAHHSLI), 167-187 (ALYGTVVTILLAIVFTFFQGV), 207-227 (FGTGFHGLHVIIGTAFLAVGL), and 247-267 (ILYWHFVDVVWLFLYISVYYW).

It belongs to the cytochrome c oxidase subunit 3 family. Component of the cytochrome c oxidase (complex IV, CIV), a multisubunit enzyme composed of a catalytic core of 3 subunits and several supernumerary subunits. The complex exists as a monomer or a dimer and forms supercomplexes (SCs) in the inner mitochondrial membrane with ubiquinol-cytochrome c oxidoreductase (cytochrome b-c1 complex, complex III, CIII).

Its subcellular location is the mitochondrion inner membrane. The catalysed reaction is 4 Fe(II)-[cytochrome c] + O2 + 8 H(+)(in) = 4 Fe(III)-[cytochrome c] + 2 H2O + 4 H(+)(out). Functionally, component of the cytochrome c oxidase, the last enzyme in the mitochondrial electron transport chain which drives oxidative phosphorylation. The respiratory chain contains 3 multisubunit complexes succinate dehydrogenase (complex II, CII), ubiquinol-cytochrome c oxidoreductase (cytochrome b-c1 complex, complex III, CIII) and cytochrome c oxidase (complex IV, CIV), that cooperate to transfer electrons derived from NADH and succinate to molecular oxygen, creating an electrochemical gradient over the inner membrane that drives transmembrane transport and the ATP synthase. Cytochrome c oxidase is the component of the respiratory chain that catalyzes the reduction of oxygen to water. Electrons originating from reduced cytochrome c in the intermembrane space (IMS) are transferred via the dinuclear copper A center (CU(A)) of subunit 2 and heme A of subunit 1 to the active site in subunit 1, a binuclear center (BNC) formed by heme A3 and copper B (CU(B)). The BNC reduces molecular oxygen to 2 water molecules using 4 electrons from cytochrome c in the IMS and 4 protons from the mitochondrial matrix. In Emericella nidulans (Aspergillus nidulans), this protein is Cytochrome c oxidase subunit 3 (cox3).